Consider the following 54-residue polypeptide: Large ribosomal subunit protein bL32 (54 aa).

The segment at 1-24 (MAVQKSKPTRSKRGMRRSHDSLKE) is disordered. Residues 7–16 (KPTRSKRGMR) are compositionally biased toward basic residues.

Belongs to the bacterial ribosomal protein bL32 family.

The polypeptide is Large ribosomal subunit protein bL32 (Buchnera aphidicola subsp. Schizaphis graminum (strain Sg)).